We begin with the raw amino-acid sequence, 1494 residues long: B-cell CLL/lymphoma 9-like protein (1494 aa).

Disordered regions lie at residues 1–236 (MRIL…PPSQ) and 269–496 (VPRA…DMGQ). Pro residues predominate over residues 20–37 (GSPPLSPRGHCPPAPAKP). Phosphoserine occurs at positions 21 and 25. An N6-acetyllysine modification is found at Lys-36. Composition is skewed to polar residues over residues 45–70 (TNHG…TCNL) and 85–96 (NQISPSNSSLKN). Ser-88 carries the phosphoserine modification. N6-acetyllysine occurs at positions 108 and 110. Composition is skewed to basic and acidic residues over residues 114 to 126 (ERSV…EQRE) and 134 to 153 (SEAK…ERKQ). Ser-116 and Ser-118 each carry phosphoserine. N6-acetyllysine is present on Lys-137. Residues 193 to 207 (PGQTAQLPLSESSAP) are compositionally biased toward polar residues. Pro residues-rich tracts occupy residues 279-289 (KVPPTPEPLPL) and 299-322 (SQPP…PPEG). Residues 302 to 530 (PPLPPPPPAP…QEEYYEEKRR (229 aa)) are necessary for interaction with CTNNB1. A compositionally biased stretch (low complexity) spans 348–360 (THPNTPTAATANN). The segment covering 396 to 418 (LSKEQLEHRERSLQTLRDIERLL) has biased composition (basic and acidic residues). Residue Ser-421 is modified to Phosphoserine. Thr-511 bears the Phosphothreonine mark. Asymmetric dimethylarginine is present on Arg-677. A phosphoserine mark is found at Ser-747, Ser-810, Ser-912, Ser-923, Ser-935, Ser-939, Ser-944, Ser-972, Ser-984, Ser-988, Ser-994, Ser-1001, Ser-1007, and Ser-1014. 2 disordered regions span residues 905–1082 (RGLG…NPLS) and 1113–1206 (ELLP…PGGP). The span at 932-957 (PTLSQVHSPLVTSPSANLKSPQTPSQ) shows a compositional bias: polar residues. Residues 974–993 (QVLSSSLGVRSPTGSPSRLK) are compositionally biased toward polar residues. A compositionally biased stretch (polar residues) spans 1016–1035 (GVSQNKQPPLSINSSSTLGN). Residues 1046–1059 (PRNSSSAPPANPSS) are compositionally biased toward low complexity. The span at 1060–1082 (GLMNPSLPFTSSPDPTPSQNPLS) shows a compositional bias: polar residues. Residues 1119–1129 (PLLPPPPPPQG) are compositionally biased toward pro residues. A compositionally biased stretch (polar residues) spans 1133-1143 (GISNNQPNQMH). Over residues 1165–1176 (HEPPPTMLPSPT) the composition is skewed to pro residues. Residue Lys-1339 forms a Glycyl lysine isopeptide (Lys-Gly) (interchain with G-Cter in SUMO2) linkage.

This sequence belongs to the BCL9 family. Found in a complex with CDC73; CTNNB1 and PYGO1. Interacts with CTNNB1. In terms of tissue distribution, expressed in kidney, liver, lung, testis, brain, spleen, heart and skeletal muscle. Highly expressed in numerous colorectal tumors compared to corresponding non-cancerous tissues.

The protein resides in the nucleus. Transcriptional regulator that acts as an activator. Promotes beta-catenin transcriptional activity. Plays a role in tumorigenesis. Enhances the neoplastic transforming activity of CTNNB1. The protein is B-cell CLL/lymphoma 9-like protein (Bcl9l) of Mus musculus (Mouse).